The chain runs to 125 residues: UPF0102 protein mlr4633 (125 aa).

This sequence belongs to the UPF0102 family.

This Mesorhizobium japonicum (strain LMG 29417 / CECT 9101 / MAFF 303099) (Mesorhizobium loti (strain MAFF 303099)) protein is UPF0102 protein mlr4633.